Consider the following 111-residue polypeptide: Large ribosomal subunit protein uL22 (111 aa).

Belongs to the universal ribosomal protein uL22 family. Part of the 50S ribosomal subunit.

Its function is as follows. This protein binds specifically to 23S rRNA; its binding is stimulated by other ribosomal proteins, e.g. L4, L17, and L20. It is important during the early stages of 50S assembly. It makes multiple contacts with different domains of the 23S rRNA in the assembled 50S subunit and ribosome. The globular domain of the protein is located near the polypeptide exit tunnel on the outside of the subunit, while an extended beta-hairpin is found that lines the wall of the exit tunnel in the center of the 70S ribosome. This Clostridium novyi (strain NT) protein is Large ribosomal subunit protein uL22.